A 229-amino-acid polypeptide reads, in one-letter code: RNA pyrophosphohydrolase (229 aa).

The region spanning 6-149 (GFRPNVGIIL…KRGVYEMALT (144 aa)) is the Nudix hydrolase domain. A Nudix box motif is present at residues 38 to 59 (GGIDRGETPEQAMFRELHEEVG). The segment at 191-229 (KPGMELPPGASFDPDPQNSVPAPLEALPTLPVPKKPLDA) is disordered. Over residues 220 to 229 (LPVPKKPLDA) the composition is skewed to pro residues.

This sequence belongs to the Nudix hydrolase family. RppH subfamily. Requires a divalent metal cation as cofactor.

Accelerates the degradation of transcripts by removing pyrophosphate from the 5'-end of triphosphorylated RNA, leading to a more labile monophosphorylated state that can stimulate subsequent ribonuclease cleavage. In Acidovorax ebreus (strain TPSY) (Diaphorobacter sp. (strain TPSY)), this protein is RNA pyrophosphohydrolase.